The following is a 62-amino-acid chain: Inner membrane protein p12 (62 aa).

The helical transmembrane segment at 16 to 36 (LLIVAIIVVIMAIMLYYFWWM) threads the bilayer.

It belongs to the asfivirus inner membrane protein p12 family. As to quaternary structure, homomultimer; disulfide-linked. Not glycosylated.

It is found in the virion membrane. This African swine fever virus (isolate Tick/Malawi/Lil 20-1/1983) (ASFV) protein is Inner membrane protein p12.